The sequence spans 433 residues: Homogentisate 1,2-dioxygenase (433 aa).

Histidine 288 acts as the Proton acceptor in catalysis. Fe cation is bound by residues histidine 331 and glutamate 337. Residues tyrosine 346 and histidine 367 each contribute to the homogentisate site. Residue histidine 367 coordinates Fe cation.

The protein belongs to the homogentisate dioxygenase family. In terms of assembly, hexamer; dimer of trimers. Fe cation serves as cofactor.

The catalysed reaction is homogentisate + O2 = 4-maleylacetoacetate + H(+). It functions in the pathway amino-acid degradation; L-phenylalanine degradation; acetoacetate and fumarate from L-phenylalanine: step 4/6. Functionally, involved in the catabolism of homogentisate (2,5-dihydroxyphenylacetate or 2,5-OH-PhAc), a central intermediate in the degradation of phenylalanine and tyrosine. Catalyzes the oxidative ring cleavage of the ar omatic ring of 2,5-dihydroxyphenylacetate to yield maleylacetoacetate. This chain is Homogentisate 1,2-dioxygenase, found in Pseudomonas putida (strain ATCC 47054 / DSM 6125 / CFBP 8728 / NCIMB 11950 / KT2440).